Reading from the N-terminus, the 399-residue chain is 1-deoxy-D-xylulose 5-phosphate reductoisomerase (399 aa).

Thr10, Gly11, Ser12, Ile13, and Asn124 together coordinate NADPH. Lys125 is a binding site for 1-deoxy-D-xylulose 5-phosphate. Glu126 is an NADPH binding site. Position 150 (Asp150) interacts with Mn(2+). Ser151, Glu152, Ser186, and His209 together coordinate 1-deoxy-D-xylulose 5-phosphate. A Mn(2+)-binding site is contributed by Glu152. An NADPH-binding site is contributed by Gly215. 4 residues coordinate 1-deoxy-D-xylulose 5-phosphate: Ser222, Asn227, Lys228, and Glu231. Residue Glu231 coordinates Mn(2+).

Belongs to the DXR family. The cofactor is Mg(2+). Mn(2+) is required as a cofactor.

The catalysed reaction is 2-C-methyl-D-erythritol 4-phosphate + NADP(+) = 1-deoxy-D-xylulose 5-phosphate + NADPH + H(+). It participates in isoprenoid biosynthesis; isopentenyl diphosphate biosynthesis via DXP pathway; isopentenyl diphosphate from 1-deoxy-D-xylulose 5-phosphate: step 1/6. Functionally, catalyzes the NADPH-dependent rearrangement and reduction of 1-deoxy-D-xylulose-5-phosphate (DXP) to 2-C-methyl-D-erythritol 4-phosphate (MEP). This Psychromonas ingrahamii (strain DSM 17664 / CCUG 51855 / 37) protein is 1-deoxy-D-xylulose 5-phosphate reductoisomerase.